The sequence spans 381 residues: Queuine tRNA-ribosyltransferase (381 aa).

Catalysis depends on D92, which acts as the Proton acceptor. Residues 92-96 (DSGGF), D146, Q190, and G217 each bind substrate. Residues 248–254 (GVGRPED) are RNA binding. Residue D267 is the Nucleophile of the active site. The RNA binding; important for wobble base 34 recognition stretch occupies residues 272 to 276 (TRNAR). Residues C305, C307, C310, and H337 each contribute to the Zn(2+) site.

The protein belongs to the queuine tRNA-ribosyltransferase family. Homodimer. Within each dimer, one monomer is responsible for RNA recognition and catalysis, while the other monomer binds to the replacement base PreQ1. Zn(2+) serves as cofactor.

The enzyme catalyses 7-aminomethyl-7-carbaguanine + guanosine(34) in tRNA = 7-aminomethyl-7-carbaguanosine(34) in tRNA + guanine. The protein operates within tRNA modification; tRNA-queuosine biosynthesis. Its function is as follows. Catalyzes the base-exchange of a guanine (G) residue with the queuine precursor 7-aminomethyl-7-deazaguanine (PreQ1) at position 34 (anticodon wobble position) in tRNAs with GU(N) anticodons (tRNA-Asp, -Asn, -His and -Tyr). Catalysis occurs through a double-displacement mechanism. The nucleophile active site attacks the C1' of nucleotide 34 to detach the guanine base from the RNA, forming a covalent enzyme-RNA intermediate. The proton acceptor active site deprotonates the incoming PreQ1, allowing a nucleophilic attack on the C1' of the ribose to form the product. After dissociation, two additional enzymatic reactions on the tRNA convert PreQ1 to queuine (Q), resulting in the hypermodified nucleoside queuosine (7-(((4,5-cis-dihydroxy-2-cyclopenten-1-yl)amino)methyl)-7-deazaguanosine). This is Queuine tRNA-ribosyltransferase from Xanthomonas campestris pv. campestris (strain 8004).